The primary structure comprises 357 residues: GTPase Obg (357 aa).

In terms of domain architecture, Obg spans 1–159 (MKFVDEAFID…KSLKLELKVL (159 aa)). Residues 160-334 (ADVGLLGMPN…LVQSIFQHVH (175 aa)) enclose the OBG-type G domain. GTP-binding positions include 166–173 (GMPNAGKS), 191–195 (FTTLH), 213–216 (DIPG), 284–287 (NKLD), and 315–317 (SAL). Mg(2+)-binding residues include Ser173 and Thr193.

The protein belongs to the TRAFAC class OBG-HflX-like GTPase superfamily. OBG GTPase family. In terms of assembly, monomer. Requires Mg(2+) as cofactor.

Its subcellular location is the cytoplasm. An essential GTPase which binds GTP, GDP and possibly (p)ppGpp with moderate affinity, with high nucleotide exchange rates and a fairly low GTP hydrolysis rate. Plays a role in control of the cell cycle, stress response, ribosome biogenesis and in those bacteria that undergo differentiation, in morphogenesis control. The protein is GTPase Obg of Acidovorax sp. (strain JS42).